Here is a 128-residue protein sequence, read N- to C-terminus: CD59 glycoprotein (128 aa).

The N-terminal stretch at 1 to 25 is a signal peptide; that stretch reads MGIQGGSVLFGLLLVLAVFCHSGNS. A UPAR/Ly6 domain is found at 26 to 108; that stretch reads LQCYSCPYPT…ALKNGGTTLS (83 aa). Cystine bridges form between C28/C51, C31/C38, C44/C64, C70/C88, and C89/C94. An N-linked (GlcNAc...) asparagine glycan is attached at N43. The GPI-anchor amidated asparagine moiety is linked to residue N102. Residues 103 to 128 constitute a propeptide, removed in mature form; the sequence is GGTTLSKKTVLLLVIPFLVAAWSLHP.

Interacts with T-cell surface antigen CD2. In terms of processing, N- and O-glycosylated.

Its subcellular location is the cell membrane. It is found in the secreted. In terms of biological role, potent inhibitor of the complement membrane attack complex (MAC) action, which protects self-cells from damage during complement activation. Acts by binding to the beta-haipins of C8 (C8A and C8B) components of the assembling MAC, forming an intermolecular beta-sheet that prevents incorporation of the multiple copies of C9 required for complete formation of the osmolytic pore. The protein is CD59 glycoprotein of Aotus trivirgatus (Three-striped night monkey).